Here is a 396-residue protein sequence, read N- to C-terminus: MAKLNAYFGEYGGQYVPQILVPALKQLEQAFIDAQEDPEFRSEFMTLLQEYAGRPTALTLTRNLTKGTKTKLYLKREDLLHGGAHKTNQVLGQALLAKRMGKHEIIAETGAGQHGVATALACALLGLKCRVYMGAKDVERQSPNVFRMKLMGAEVIPVHSGSATLKDACNEALRDWSGSYEDAHYLLGTAAGPHPFPTIVREFQRMIGEETKNQILAREGRLPDAVIACVGGGSNAIGMFADFIEEESVRLIGVEPAGKGIDTDQHGAPLKHGKTGIFFGMKAPLMQDENGQVEESYSVSAGLDFPSVGPQHAHLNAIGRAEYDNVTDDEALEAFQELARSEGIIPALESSHALAHALRMARENPEKEQLLVVNLSGRGDKDIFTVHAILEEKGVI.

N6-(pyridoxal phosphate)lysine is present on lysine 86.

This sequence belongs to the TrpB family. In terms of assembly, tetramer of two alpha and two beta chains. The cofactor is pyridoxal 5'-phosphate.

It carries out the reaction (1S,2R)-1-C-(indol-3-yl)glycerol 3-phosphate + L-serine = D-glyceraldehyde 3-phosphate + L-tryptophan + H2O. It functions in the pathway amino-acid biosynthesis; L-tryptophan biosynthesis; L-tryptophan from chorismate: step 5/5. Functionally, the beta subunit is responsible for the synthesis of L-tryptophan from indole and L-serine. This Vibrio parahaemolyticus serotype O3:K6 (strain RIMD 2210633) protein is Tryptophan synthase beta chain 1 (trpB1).